The primary structure comprises 238 residues: Uridylate kinase (238 aa).

Lys-11–Gly-14 serves as a coordination point for ATP. Residue Gly-52 coordinates UMP. Residues Gly-53 and Arg-57 each contribute to the ATP site. Residues Asp-72 and Thr-134 to Thr-141 contribute to the UMP site. Residues Asn-162, Tyr-168, and Asp-171 each coordinate ATP.

Belongs to the UMP kinase family. As to quaternary structure, homohexamer.

The protein localises to the cytoplasm. It catalyses the reaction UMP + ATP = UDP + ADP. It functions in the pathway pyrimidine metabolism; CTP biosynthesis via de novo pathway; UDP from UMP (UMPK route): step 1/1. Its activity is regulated as follows. Inhibited by UTP. Catalyzes the reversible phosphorylation of UMP to UDP. This is Uridylate kinase from Mesoplasma florum (strain ATCC 33453 / NBRC 100688 / NCTC 11704 / L1) (Acholeplasma florum).